Reading from the N-terminus, the 164-residue chain is MKRIAICPGSFDPITNGHLDIIERAAAIFDEVIVAVLENSSKAPLFDVEERLGLIRDVTTHLPNVSADAFGGLLVEYAAEREAATIVRGLRAVSDFEYELQIASINKKLNENVETLFMMTNSQYSFLSSSIVKEVAKYGASVSELVPEQVEIALRKKYQVSSGQ.

S10 is a substrate binding site. Residues 10–11 and H18 each bind ATP; that span reads SF. Residues K42, L74, and R88 each contribute to the substrate site. ATP is bound by residues 89–91, E99, and 124–130; these read GLR and YSFLSSS.

Belongs to the bacterial CoaD family. In terms of assembly, homohexamer. Mg(2+) is required as a cofactor.

The protein resides in the cytoplasm. It catalyses the reaction (R)-4'-phosphopantetheine + ATP + H(+) = 3'-dephospho-CoA + diphosphate. It functions in the pathway cofactor biosynthesis; coenzyme A biosynthesis; CoA from (R)-pantothenate: step 4/5. Functionally, reversibly transfers an adenylyl group from ATP to 4'-phosphopantetheine, yielding dephospho-CoA (dPCoA) and pyrophosphate. In Exiguobacterium sp. (strain ATCC BAA-1283 / AT1b), this protein is Phosphopantetheine adenylyltransferase.